The sequence spans 106 residues: uncharacterized protein (106 aa).

This is an uncharacterized protein from Rhodococcus erythropolis (Arthrobacter picolinophilus).